We begin with the raw amino-acid sequence, 289 residues long: Purine nucleoside phosphorylase (289 aa).

N-acetylmethionine is present on M1. Phosphate-binding positions include S33, H64, and 84–86; that span reads RFH. A purine D-ribonucleoside is bound at residue Y88. A116 provides a ligand contact to phosphate. Positions 201 and 219 each coordinate a purine D-ribonucleoside. S220 provides a ligand contact to phosphate. N243 and H257 together coordinate a purine D-ribonucleoside.

Belongs to the PNP/MTAP phosphorylase family. Homotrimer.

The protein resides in the cytoplasm. The catalysed reaction is inosine + phosphate = alpha-D-ribose 1-phosphate + hypoxanthine. It carries out the reaction guanosine + phosphate = alpha-D-ribose 1-phosphate + guanine. It catalyses the reaction 2'-deoxyguanosine + phosphate = 2-deoxy-alpha-D-ribose 1-phosphate + guanine. The enzyme catalyses 2'-deoxyinosine + phosphate = 2-deoxy-alpha-D-ribose 1-phosphate + hypoxanthine. It functions in the pathway purine metabolism; purine nucleoside salvage. In terms of biological role, catalyzes the phosphorolytic breakdown of the N-glycosidic bond in the beta-(deoxy)ribonucleoside molecules, with the formation of the corresponding free purine bases and pentose-1-phosphate. Preferentially acts on 6-oxopurine nucleosides including inosine and guanosine. The sequence is that of Purine nucleoside phosphorylase (Pnp) from Rattus norvegicus (Rat).